The primary structure comprises 102 residues: A-type ATP synthase subunit F (102 aa).

This sequence belongs to the V-ATPase F subunit family. Has multiple subunits with at least A(3), B(3), C, D, E, F, H, I and proteolipid K(x).

It is found in the cell membrane. Component of the A-type ATP synthase that produces ATP from ADP in the presence of a proton gradient across the membrane. The chain is A-type ATP synthase subunit F from Thermococcus sibiricus (strain DSM 12597 / MM 739).